The chain runs to 248 residues: Probable septum site-determining protein MinC (248 aa).

The tract at residues 94–126 is disordered; that stretch reads GMPPAMRGGQPAADFEAPAGEPQANPGAPEPQI.

This sequence belongs to the MinC family. Interacts with MinD and FtsZ.

Cell division inhibitor that blocks the formation of polar Z ring septums. Rapidly oscillates between the poles of the cell to destabilize FtsZ filaments that have formed before they mature into polar Z rings. Prevents FtsZ polymerization. This chain is Probable septum site-determining protein MinC, found in Brucella suis biovar 1 (strain 1330).